The primary structure comprises 369 residues: uncharacterized protein (369 aa).

Helical transmembrane passes span 25 to 45 (QFVA…WYDW), 47 to 67 (FCLL…FVPA), 119 to 139 (LNIV…FNLM), 152 to 172 (LSGF…FSAL), 206 to 226 (HALN…LLFV), 235 to 255 (LKPL…SLYL), 272 to 292 (PIAL…GVFG), 296 to 316 (FGIY…TVFL), and 323 to 343 (LIFF…FTVA).

It to B.subtilis ComEC.

It is found in the cell membrane. This is an uncharacterized protein from Mycoplasma genitalium (strain ATCC 33530 / DSM 19775 / NCTC 10195 / G37) (Mycoplasmoides genitalium).